A 234-amino-acid chain; its full sequence is UstYa family oxidase phomYd' (234 aa).

The interval 1 to 26 (MEKFFSPSRHNYADLSPTDVPASEES) is disordered. The helical transmembrane segment at 47 to 69 (VLVNRLLAASTVALVMVSLWLGW) threads the bilayer. Positions 151–155 (HWDHC) match the HXXHC 1 motif. Asn-208 carries N-linked (GlcNAc...) asparagine glycosylation.

This sequence belongs to the ustYa family.

It localises to the membrane. It participates in mycotoxin biosynthesis. UstYa family oxidase; part of the gene cluster that mediates the biosynthesis of the phomopsins, a group of hexapeptide mycotoxins which infects lupins and causes lupinosis disease in livestock. Within the pathway, phomYd' catalyzes the desaturation of the Asp moiety into 2,3-dehydroaspartic acid (dAsp). The pathway starts with the processing of the precursor phomA' by several endopeptidases including kexin proteases as well as the cluster-specific S41 family peptidase phomP1 and the oligopeptidase phomG' to produce 10 identical copies of the hexapeptide Tyr-Val-Ile-Pro-Ile-Asp. After being excised from the precursor peptide, the core peptides are cyclized and modified post-translationally by enzymes encoded within the gene cluster. The timing and order of proteolysis of the phomA' precursor and PTMs are still unknown. Two tyrosinase-like enzymes, phomQ1' and phomQ2, catalyze the chlorination and hydroxylation of Tyr, respectively. PhomYb, is proposed to be involved in the construction of the macrocyclic structure. The other 4 ustYa family proteins may be involved in PTMs that generate the unique structure of phomopsin A. PhomYa' is required for the hydroxylation of C-beta of Tyr. PhomYc', phomYd', and phomYe are responsible for the biosynthesis of 2,3-dehydroisoleucine (dIle), 2,3-dehydroaspartic acid (dAsp), and 3,4-dehydroproline (dPro), respectively. While dIle formation by phomYc' is indispensable for the installation of dAsp by phomYd', the order of the other PTMs have not been elucidated yet. Most of the biosynthetic enzymes likely have broad substrate specificity, and thus, there might be a metabolic grid from a precursor to phomopsin A. The enzyme(s) responsible for the biosynthesis of 3,4-dehydrovaline (dVal) have also not been identified yet. Finally, phomM' acts as an S-adenosylmethionine-dependent alpha-N-methyltransferase that catalyzes two successive N-methylation reactions, converting N-desmethyl-phomopsin A to phomopsin A and phomopsin A further to an N,N-dimethylated congener called phomopsin E. This chain is UstYa family oxidase phomYd', found in Diaporthe leptostromiformis (Lupinosis disease fungus).